Here is a 354-residue protein sequence, read N- to C-terminus: Holliday junction branch migration complex subunit RuvB (354 aa).

The tract at residues 4-198 (TTDYGASNTG…FGFTAHLDFY (195 aa)) is large ATPase domain (RuvB-L). ATP contacts are provided by residues Leu37, Arg38, Gly79, Lys82, Thr83, Thr84, 145-147 (EDF), Arg188, Tyr198, and Arg235. Thr83 serves as a coordination point for Mg(2+). The segment at 199–269 (PHEELEKLIE…DVKEALALYQ (71 aa)) is small ATPAse domain (RuvB-S). Residues 272–354 (SEGLDRLDIA…TPKDDVSKLF (83 aa)) are head domain (RuvB-H). Arg327 and Arg332 together coordinate DNA.

This sequence belongs to the RuvB family. In terms of assembly, homohexamer. Forms an RuvA(8)-RuvB(12)-Holliday junction (HJ) complex. HJ DNA is sandwiched between 2 RuvA tetramers; dsDNA enters through RuvA and exits via RuvB. An RuvB hexamer assembles on each DNA strand where it exits the tetramer. Each RuvB hexamer is contacted by two RuvA subunits (via domain III) on 2 adjacent RuvB subunits; this complex drives branch migration. In the full resolvosome a probable DNA-RuvA(4)-RuvB(12)-RuvC(2) complex forms which resolves the HJ.

The protein resides in the cytoplasm. The enzyme catalyses ATP + H2O = ADP + phosphate + H(+). The RuvA-RuvB-RuvC complex processes Holliday junction (HJ) DNA during genetic recombination and DNA repair, while the RuvA-RuvB complex plays an important role in the rescue of blocked DNA replication forks via replication fork reversal (RFR). RuvA specifically binds to HJ cruciform DNA, conferring on it an open structure. The RuvB hexamer acts as an ATP-dependent pump, pulling dsDNA into and through the RuvAB complex. RuvB forms 2 homohexamers on either side of HJ DNA bound by 1 or 2 RuvA tetramers; 4 subunits per hexamer contact DNA at a time. Coordinated motions by a converter formed by DNA-disengaged RuvB subunits stimulates ATP hydrolysis and nucleotide exchange. Immobilization of the converter enables RuvB to convert the ATP-contained energy into a lever motion, pulling 2 nucleotides of DNA out of the RuvA tetramer per ATP hydrolyzed, thus driving DNA branch migration. The RuvB motors rotate together with the DNA substrate, which together with the progressing nucleotide cycle form the mechanistic basis for DNA recombination by continuous HJ branch migration. Branch migration allows RuvC to scan DNA until it finds its consensus sequence, where it cleaves and resolves cruciform DNA. The protein is Holliday junction branch migration complex subunit RuvB of Bifidobacterium longum (strain NCC 2705).